A 333-amino-acid chain; its full sequence is Global transcription regulator sge1 (333 aa).

Disordered regions lie at residues 93–139 (PPGE…PSVP) and 241–307 (QHQS…PQYQ).

Belongs to the MIT1/WOR1 family.

It localises to the nucleus. Global transcriptional regulator that acts as an activator of secondary metabolism. Required for expression of a yet uncharacterized secondary metabolism gene cluster containing a non-canonical non-ribosomal peptide synthetase. Not required for conidiogenesis nor for pathogenicity, but is involved in vegetative growth. The chain is Global transcription regulator sge1 from Gibberella fujikuroi (strain CBS 195.34 / IMI 58289 / NRRL A-6831) (Bakanae and foot rot disease fungus).